We begin with the raw amino-acid sequence, 318 residues long: Pseudouridine-5'-phosphate glycosidase 1 (318 aa).

Glu-29 (proton donor) is an active-site residue. The substrate site is built by Lys-90 and Val-110. Mn(2+) is bound at residue Asp-142. 144-146 (SAD) provides a ligand contact to substrate. Lys-163 serves as the catalytic Nucleophile.

The protein belongs to the pseudouridine-5'-phosphate glycosidase family. Homotrimer. Mn(2+) serves as cofactor.

It catalyses the reaction D-ribose 5-phosphate + uracil = psi-UMP + H2O. Its function is as follows. Catalyzes the reversible cleavage of pseudouridine 5'-phosphate (PsiMP) to ribose 5-phosphate and uracil. Functions biologically in the cleavage direction, as part of a pseudouridine degradation pathway. In Photorhabdus laumondii subsp. laumondii (strain DSM 15139 / CIP 105565 / TT01) (Photorhabdus luminescens subsp. laumondii), this protein is Pseudouridine-5'-phosphate glycosidase 1.